Reading from the N-terminus, the 227-residue chain is Probable cytokinin riboside 5'-monophosphate phosphoribohydrolase LOGL9 (227 aa).

Over residues 1–15 (MYISSPHTSHFTSID) the composition is skewed to polar residues. The tract at residues 1-26 (MYISSPHTSHFTSIDRSPAVVSESDR) is disordered. Substrate is bound by residues Glu117, 135–136 (RK), and 152–158 (GYGTLEE).

It belongs to the LOG family. Expressed in roots, leaves and stems.

It catalyses the reaction N(6)-(dimethylallyl)adenosine 5'-phosphate + H2O = N(6)-dimethylallyladenine + D-ribose 5-phosphate. It carries out the reaction 9-ribosyl-trans-zeatin 5'-phosphate + H2O = trans-zeatin + D-ribose 5-phosphate. Cytokinin-activating enzyme working in the direct activation pathway. Phosphoribohydrolase that converts inactive cytokinin nucleotides to the biologically active free-base forms. In Oryza sativa subsp. japonica (Rice), this protein is Probable cytokinin riboside 5'-monophosphate phosphoribohydrolase LOGL9 (LOGL9).